Here is a 167-residue protein sequence, read N- to C-terminus: Chorion class CB protein PC404 (167 aa).

Positions 1 to 55 (IGREAIVGAGLQGPFGGPWPYDALSPFDMPYGPALPAMSCGAGSFGPSSGFAPAA) are left arm. The tract at residues 56–126 (AYGGGLAVTS…GDGAVGIVAE (71 aa)) is central domain. The interval 127-167 (TPFASTSVNPAYGYGGAIGGGVPYNSYGPIGYGGCGYNALY) is right arm.

The protein belongs to the chorion protein family.

Functionally, this protein is one of many from the eggshell of the silk moth. The sequence is that of Chorion class CB protein PC404 from Antheraea polyphemus (Polyphemus moth).